Consider the following 721-residue polypeptide: BBSome complex member BBS2 (721 aa).

Residues 325–369 (RGNLMDTSAEQDLIRELSQKKQNLLLELRNYEENAKAELASPLNE) adopt a coiled-coil conformation.

As to quaternary structure, part of BBSome complex, that contains BBS1, BBS2, BBS4, BBS5, BBS7, BBS8/TTC8, BBS9 and BBIP10. Interacts (via C-terminus) with BBS7. Interacts (via coiled coil domain) with MKKS. Interacts with CCDC28B and ALDOB. Interacts with DLEC1. As to expression, widely expressed.

It localises to the cell projection. Its subcellular location is the cilium membrane. The protein resides in the cytoplasm. The protein localises to the cytoskeleton. It is found in the microtubule organizing center. It localises to the centrosome. Its subcellular location is the centriolar satellite. The BBSome complex is thought to function as a coat complex required for sorting of specific membrane proteins to the primary cilia. The BBSome complex is required for ciliogenesis but is dispensable for centriolar satellite function. This ciliogenic function is mediated in part by the Rab8 GDP/GTP exchange factor, which localizes to the basal body and contacts the BBSome. Rab8(GTP) enters the primary cilium and promotes extension of the ciliary membrane. Firstly the BBSome associates with the ciliary membrane and binds to RAB3IP/Rabin8, the guanosyl exchange factor (GEF) for Rab8 and then the Rab8-GTP localizes to the cilium and promotes docking and fusion of carrier vesicles to the base of the ciliary membrane. The BBSome complex, together with the LTZL1, controls SMO ciliary trafficking and contributes to the sonic hedgehog (SHH) pathway regulation. Required for proper BBSome complex assembly and its ciliary localization. The chain is BBSome complex member BBS2 from Homo sapiens (Human).